A 392-amino-acid polypeptide reads, in one-letter code: DNA primase small subunit PriS (392 aa).

Residues D98, D100, and D295 contribute to the active site.

It belongs to the eukaryotic-type primase small subunit family. As to quaternary structure, heterodimer of a small subunit (PriS) and a large subunit (PriL). It depends on Mg(2+) as a cofactor. Mn(2+) is required as a cofactor.

Catalytic subunit of DNA primase, an RNA polymerase that catalyzes the synthesis of short RNA molecules used as primers for DNA polymerase during DNA replication. The small subunit contains the primase catalytic core and has DNA synthesis activity on its own. Binding to the large subunit stabilizes and modulates the activity, increasing the rate of DNA synthesis while decreasing the length of the DNA fragments, and conferring RNA synthesis capability. The DNA polymerase activity may enable DNA primase to also catalyze primer extension after primer synthesis. May also play a role in DNA repair. This chain is DNA primase small subunit PriS, found in Haloarcula marismortui (strain ATCC 43049 / DSM 3752 / JCM 8966 / VKM B-1809) (Halobacterium marismortui).